A 1496-amino-acid polypeptide reads, in one-letter code: Carbamoyl-phosphate synthase [ammonia], mitochondrial (1496 aa).

The transit peptide at 1-33 (MTRILSVFKTAKTGVLNAAAHRYRGFSKAGVRL) directs the protein to the mitochondrion. The tract at residues 34-214 (MSVKAQTANL…TKVFGKGNPV (181 aa)) is anthranilate phosphoribosyltransferase homolog. One can recognise a Glutamine amidotransferase type-1 domain in the interval 215–401 (RIVAVDCGVK…MSLIKKGKGT (187 aa)). The active-site For GATase activity is the Cys-290. ATP-grasp domains follow at residues 548 to 740 (SDKL…KIAL) and 1090 to 1281 (SAVL…KVMI). Residues 1352–1496 (FKLPQKGILI…YRQFGGAKPS (145 aa)) form the MGS-like domain. Thr-1388, Thr-1391, Trp-1407, Asn-1433, Asn-1436, and Asn-1445 together coordinate N-acetyl-L-glutamate.

The protein localises to the mitochondrion. It catalyses the reaction hydrogencarbonate + NH4(+) + 2 ATP = carbamoyl phosphate + 2 ADP + phosphate + 2 H(+). Its activity is regulated as follows. Requires N-acetyl-L-glutamate (NAG) as an allosteric activator. Functionally, involved in the urea cycle of ureotelic animals where the enzyme plays an important role in removing excess ammonia from the cell. The chain is Carbamoyl-phosphate synthase [ammonia], mitochondrial from Aquarana catesbeiana (American bullfrog).